Here is a 799-residue protein sequence, read N- to C-terminus: Disintegrin and metalloproteinase domain-containing protein B (799 aa).

The N-terminal stretch at 1–23 (MKAFSCLLSVIATAASLFQHVDA) is a signal peptide. Residues 24-707 (RSHARDKLNN…VSDWVSRHKP (684 aa)) are Extracellular-facing. 5 N-linked (GlcNAc...) asparagine glycosylation sites follow: Asn33, Asn227, Asn228, Asn314, and Asn408. Residues 272-511 (KVALIGVVAD…RTILTSCLTT (240 aa)) enclose the Peptidase M12B domain. 3 cysteine pairs are disulfide-bonded: Cys396-Cys496, Cys449-Cys460, and Cys581-Cys601. His432 lines the Zn(2+) pocket. Residue Glu433 is part of the active site. Zn(2+) is bound by residues His436 and His442. The Disintegrin domain maps to 520-609 (GQQCGNGIVE…DCPHDIHSKD (90 aa)). A helical transmembrane segment spans residues 708–728 (IVIGVAVGAGCLLLLAIASCI). Topologically, residues 729-799 (CGRSRRQRPR…PGHLPSTRYA (71 aa)) are cytoplasmic. The interval 753–799 (VYNGWNGAPPNAQQSSPGGHPPYNNIPPPINAPPPAYPGHLPSTRYA) is disordered. Residues 776–789 (NNIPPPINAPPPAY) are compositionally biased toward pro residues.

Requires Zn(2+) as cofactor.

Its subcellular location is the membrane. Its function is as follows. Probable zinc protease. The protein is Disintegrin and metalloproteinase domain-containing protein B (ADM-B) of Arthroderma benhamiae (strain ATCC MYA-4681 / CBS 112371) (Trichophyton mentagrophytes).